The chain runs to 233 residues: Probable dihydroorotate dehydrogenase B (NAD(+)), electron transfer subunit (233 aa).

One can recognise an FAD-binding FR-type domain in the interval 1–87 (MYRVVTIEEV…RGPYGHGFIK (87 aa)). Cys-202, Cys-207, Cys-210, and Cys-218 together coordinate [2Fe-2S] cluster.

It belongs to the PyrK family. In terms of assembly, heterotetramer of 2 PyrK and 2 PyrD type B subunits. [2Fe-2S] cluster is required as a cofactor. It depends on FAD as a cofactor.

It participates in pyrimidine metabolism; UMP biosynthesis via de novo pathway; orotate from (S)-dihydroorotate (NAD(+) route): step 1/1. In terms of biological role, responsible for channeling the electrons from the oxidation of dihydroorotate from the FMN redox center in the PyrD type B subunit to the ultimate electron acceptor NAD(+). The sequence is that of Probable dihydroorotate dehydrogenase B (NAD(+)), electron transfer subunit from Thermococcus kodakarensis (strain ATCC BAA-918 / JCM 12380 / KOD1) (Pyrococcus kodakaraensis (strain KOD1)).